The chain runs to 413 residues: Na(+)/H(+) antiporter NhaA (413 aa).

A run of 11 helical transmembrane segments spans residues 15-35, 57-77, 93-113, 123-143, 152-172, 175-195, 211-231, 261-281, 295-315, 333-353, and 364-384; these read LESGAAGGLLLMACAVLALFV, LLHWINDGLMAIFFLFVGLEI, ALPCIAAAGGVVVPGLIYASL, GWAIPTATDIAFALGVLSLLG, IFLATLAIVDDLVAVLIIAVF, AELNTAALMGAALVTLVLLGF, VALWWLVLLSGVHATIAGVVL, WVAFLVVPIFGFANAGLSFAG, VALGLFFGKQIGVFGAAWLAI, GVSLLCGIGFTMSLFIGLLAF, and VGVLVGSLSSALIGATLLSLT.

Belongs to the NhaA Na(+)/H(+) (TC 2.A.33) antiporter family.

The protein localises to the cell inner membrane. The enzyme catalyses Na(+)(in) + 2 H(+)(out) = Na(+)(out) + 2 H(+)(in). In terms of biological role, na(+)/H(+) antiporter that extrudes sodium in exchange for external protons. In Caulobacter vibrioides (strain ATCC 19089 / CIP 103742 / CB 15) (Caulobacter crescentus), this protein is Na(+)/H(+) antiporter NhaA.